A 263-amino-acid chain; its full sequence is Microtubule-associated protein RP/EB family member 1 (263 aa).

One can recognise a Calponin-homology (CH) domain in the interval 14 to 116; it reads NLSRHDMLAW…FVQWFKKFFD (103 aa). Residues 180-250 form the EB1 C-terminal domain; sequence KKAAGDDESA…LYATDEGFVI (71 aa).

It belongs to the MAPRE family.

It localises to the cytoplasm. The protein localises to the cytoskeleton. It is found in the microtubule organizing center. The protein resides in the centrosome. Its subcellular location is the golgi apparatus. It localises to the spindle. The protein localises to the spindle pole. Functionally, plus-end tracking protein (+TIP) that binds to the plus-end of microtubules and regulates the dynamics of the microtubule cytoskeleton. Promotes cytoplasmic microtubule nucleation and elongation. Involved in mitotic spindle positioning by stabilizing microtubules and promoting dynamic connection between astral microtubules and the cortex during mitotic chromosome segregation. The polypeptide is Microtubule-associated protein RP/EB family member 1 (MAPRE1) (Coturnix coturnix (Common quail)).